A 217-amino-acid chain; its full sequence is Ribosomal RNA small subunit methyltransferase G (217 aa).

S-adenosyl-L-methionine contacts are provided by residues glycine 79, leucine 84, 102 to 104 (DST), 130 to 131 (VE), and arginine 144.

Belongs to the methyltransferase superfamily. RNA methyltransferase RsmG family.

It is found in the cytoplasm. Specifically methylates the N7 position of a guanine in 16S rRNA. The polypeptide is Ribosomal RNA small subunit methyltransferase G (Chlorobaculum tepidum (strain ATCC 49652 / DSM 12025 / NBRC 103806 / TLS) (Chlorobium tepidum)).